The primary structure comprises 2242 residues: Multifunctional protein CAD (2242 aa).

Residues 1–365 (MATLFLDDGS…CARDVKLGVN (365 aa)) are GATase (Glutamine amidotransferase). Ser44, Gly222, and Gly224 together coordinate L-glutamine. One can recognise a Glutamine amidotransferase type-1 domain in the interval 177 to 363 (KIMAVDCGMK…LECARDVKLG (187 aa)). Cys252 acts as the Nucleophile; for GATase activity in catalysis. The L-glutamine site is built by Leu253, Gln256, Asn294, Gly296, and Phe297. Residues His336 and Glu338 each act as for GATase activity in the active site. A linker region spans residues 366–397 (LDKTVKGRVISHYSFKNGTENSKTPPGRIQPH). The segment at 398-937 (KVLILGSGGL…GEGHDLDFTK (540 aa)) is CPSase A. A CPSase (Carbamoyl-phosphate synthase) region spans residues 398-1462 (KVLILGSGGL…TPPVKTHIDS (1065 aa)). ATP contacts are provided by Arg518, Arg558, Gly564, Gly565, Lys595, Glu602, Gly628, Ile629, His630, Gln671, and Glu685. 2 consecutive ATP-grasp domains span residues 522-714 (VEKM…KLAL) and 1057-1248 (SRML…KVIM). Residues Gln671, Glu685, and Asn687 each coordinate Mg(2+). Positions 671, 685, and 687 each coordinate Mn(2+). Residues 938–1462 (PHVMVIGSGV…TPPVKTHIDS (525 aa)) are CPSase B. ATP contacts are provided by Arg1093, Lys1132, Ile1134, Glu1139, Gly1164, Val1165, His1166, Ser1167, Gln1207, and Glu1219. Residues Gln1207, Glu1219, and Asn1221 each coordinate Mg(2+). Mn(2+)-binding residues include Gln1207, Glu1219, and Asn1221. Residues 1313-1469 (FKIPKKNILL…IDSMSSHKLI (157 aa)) form the MGS-like domain. Positions 1463–1796 (MSSHKLIRLP…KGRVRRVVLR (334 aa)) are DHOase (dihydroorotase). Zn(2+)-binding residues include His1478 and His1480. (S)-dihydroorotate is bound by residues Arg1482 and Asn1512. Positions 1563, 1597, 1620, 1621, and 1644 each coordinate Zn(2+). N6-carboxylysine is present on Lys1563. Arg1668 is a binding site for (S)-dihydroorotate. Asp1693 is a binding site for Zn(2+). Asp1693 serves as the catalytic For DHOase activity. Positions 1697 and 1709 each coordinate (S)-dihydroorotate. Residues 1797 to 1934 (GEVAYIDGQV…QAVPHPYSLL (138 aa)) are linker. Residues 1829–1862 (PTTVKTPEHSKPTQTETVRTRTASPRRLASSGPA) form a disordered region. Polar residues predominate over residues 1840-1851 (PTQTETVRTRTA). An ATCase (Aspartate transcarbamylase) region spans residues 1935–2242 (LHPFVGQHIL…ALLATVLGKF (308 aa)). Residues Arg1992 and Thr1993 each contribute to the carbamoyl phosphate site. Lys2020 is an L-aspartate binding site. Residues Arg2041, His2069, and Gln2072 each contribute to the carbamoyl phosphate site. Residues Arg2102 and Arg2163 each contribute to the L-aspartate site. Positions 2202 and 2203 each coordinate carbamoyl phosphate.

In the N-terminal section; belongs to the CarA family. This sequence in the 2nd section; belongs to the CarB family. It in the 3rd section; belongs to the metallo-dependent hydrolases superfamily. DHOase family. CAD subfamily. The protein in the C-terminal section; belongs to the aspartate/ornithine carbamoyltransferase superfamily. ATCase family. As to quaternary structure, homohexamer. Mg(2+) is required as a cofactor. The cofactor is Mn(2+). It depends on Zn(2+) as a cofactor. As to expression, present in the testis but not in the liver.

Its subcellular location is the cytoplasm. It is found in the nucleus. The enzyme catalyses hydrogencarbonate + L-glutamine + 2 ATP + H2O = carbamoyl phosphate + L-glutamate + 2 ADP + phosphate + 2 H(+). It carries out the reaction L-glutamine + H2O = L-glutamate + NH4(+). The catalysed reaction is hydrogencarbonate + NH4(+) + 2 ATP = carbamoyl phosphate + 2 ADP + phosphate + 2 H(+). It catalyses the reaction carbamoyl phosphate + L-aspartate = N-carbamoyl-L-aspartate + phosphate + H(+). The enzyme catalyses (S)-dihydroorotate + H2O = N-carbamoyl-L-aspartate + H(+). It participates in pyrimidine metabolism; UMP biosynthesis via de novo pathway; (S)-dihydroorotate from bicarbonate: step 1/3. The protein operates within pyrimidine metabolism; UMP biosynthesis via de novo pathway; (S)-dihydroorotate from bicarbonate: step 2/3. Its pathway is pyrimidine metabolism; UMP biosynthesis via de novo pathway; (S)-dihydroorotate from bicarbonate: step 3/3. With respect to regulation, allosterically regulated and controlled by phosphorylation. 5-phosphoribose 1-diphosphate is an activator while UMP is an inhibitor of the CPSase reaction. In terms of biological role, multifunctional protein that encodes the first 3 enzymatic activities of the de novo pyrimidine pathway: carbamoylphosphate synthetase (CPSase; EC 6.3.5.5), aspartate transcarbamylase (ATCase; EC 2.1.3.2) and dihydroorotase (DHOase; EC 3.5.2.3). The CPSase-function is accomplished in 2 steps, by a glutamine-dependent amidotransferase activity (GATase) that binds and cleaves glutamine to produce ammonia, followed by an ammonium-dependent carbamoyl phosphate synthetase, which reacts with the ammonia, hydrogencarbonate and ATP to form carbamoyl phosphate. The endogenously produced carbamoyl phosphate is sequestered and channeled to the ATCase active site. ATCase then catalyzes the formation of carbamoyl-L-aspartate from L-aspartate and carbamoyl phosphate. In the last step, DHOase catalyzes the cyclization of carbamoyl aspartate to dihydroorotate. This chain is Multifunctional protein CAD (CAD), found in Squalus acanthias (Spiny dogfish).